The following is a 154-amino-acid chain: Myoglobin (154 aa).

The Globin domain occupies 2-148 (GLSDGEWQLV…FRKDMASNYK (147 aa)). Residue Ser4 is modified to Phosphoserine. Residue His65 coordinates nitrite. His65 serves as a coordination point for O2. Thr68 carries the phosphothreonine modification. His94 contributes to the heme b binding site.

The protein belongs to the globin family. Monomeric.

It is found in the cytoplasm. It localises to the sarcoplasm. The catalysed reaction is Fe(III)-heme b-[protein] + nitric oxide + H2O = Fe(II)-heme b-[protein] + nitrite + 2 H(+). It carries out the reaction H2O2 + AH2 = A + 2 H2O. Functionally, monomeric heme protein which primary function is to store oxygen and facilitate its diffusion within muscle tissues. Reversibly binds oxygen through a pentacoordinated heme iron and enables its timely and efficient release as needed during periods of heightened demand. Depending on the oxidative conditions of tissues and cells, and in addition to its ability to bind oxygen, it also has a nitrite reductase activity whereby it regulates the production of bioactive nitric oxide. Under stress conditions, like hypoxia and anoxia, it also protects cells against reactive oxygen species thanks to its pseudoperoxidase activity. This is Myoglobin (MB) from Gorilla gorilla beringei (Mountain gorilla).